Here is a 252-residue protein sequence, read N- to C-terminus: Large ribosomal subunit protein uL30 (252 aa).

Belongs to the universal ribosomal protein uL30 family.

Functionally, binds to G-rich structures in 28S rRNA and in mRNAs. Plays a regulatory role in the translation apparatus; inhibits cell-free translation of mRNAs. This Drosophila melanogaster (Fruit fly) protein is Large ribosomal subunit protein uL30 (RpL7).